A 55-amino-acid polypeptide reads, in one-letter code: Potassium channel toxin alpha-KTX 12 Sp2 (55 aa).

The N-terminal stretch at Met1–Gly18 is a signal peptide. Intrachain disulfides connect Cys26–Cys46, Cys32–Cys51, and Cys36–Cys53.

Belongs to the short scorpion toxin superfamily. Potassium channel inhibitor family. Alpha-KTx 12 subfamily. Expressed by the venom gland.

The protein localises to the secreted. In terms of biological role, blocks mouse voltage-gated potassium channels Kv1.3/KCNA3 (IC(50)=0.3-30 nM), when the channel is expressed in Jurkat T cells or in HEK293 cells. Also shows a weaker inhibition on mKv1.2/KCNA2 (IC(50)=56.9 nM) and mKv1.1/KCNA1 (IC(50)=485 nM). Probably through the inhibition of both Kv1.2/KCNA2 and Kv1.3/KCNA3, the toxin also reduces the free calcium concentration in Jurkat T cells, inhibits the activation of Jurkat T cells and reduces the release of inflammatory cytokines interleukin-2, showing a strong immunosuppressant effect. The polypeptide is Potassium channel toxin alpha-KTX 12 Sp2 (Scorpiops pococki (Scorpion)).